We begin with the raw amino-acid sequence, 636 residues long: 1-deoxy-D-xylulose-5-phosphate synthase (636 aa).

Residues His75 and 116 to 118 (AHS) contribute to the thiamine diphosphate site. Asp147 is a binding site for Mg(2+). Thiamine diphosphate-binding positions include 148-149 (GA), Asn177, Tyr288, and Glu370. A Mg(2+)-binding site is contributed by Asn177.

The protein belongs to the transketolase family. DXPS subfamily. In terms of assembly, homodimer. Mg(2+) is required as a cofactor. The cofactor is thiamine diphosphate.

It carries out the reaction D-glyceraldehyde 3-phosphate + pyruvate + H(+) = 1-deoxy-D-xylulose 5-phosphate + CO2. It functions in the pathway metabolic intermediate biosynthesis; 1-deoxy-D-xylulose 5-phosphate biosynthesis; 1-deoxy-D-xylulose 5-phosphate from D-glyceraldehyde 3-phosphate and pyruvate: step 1/1. Functionally, catalyzes the acyloin condensation reaction between C atoms 2 and 3 of pyruvate and glyceraldehyde 3-phosphate to yield 1-deoxy-D-xylulose-5-phosphate (DXP). This Ralstonia pickettii (strain 12J) protein is 1-deoxy-D-xylulose-5-phosphate synthase.